Reading from the N-terminus, the 430-residue chain is Gamma-glutamyl phosphate reductase (430 aa).

Belongs to the gamma-glutamyl phosphate reductase family.

Its subcellular location is the cytoplasm. The catalysed reaction is L-glutamate 5-semialdehyde + phosphate + NADP(+) = L-glutamyl 5-phosphate + NADPH + H(+). Its pathway is amino-acid biosynthesis; L-proline biosynthesis; L-glutamate 5-semialdehyde from L-glutamate: step 2/2. In terms of biological role, catalyzes the NADPH-dependent reduction of L-glutamate 5-phosphate into L-glutamate 5-semialdehyde and phosphate. The product spontaneously undergoes cyclization to form 1-pyrroline-5-carboxylate. The sequence is that of Gamma-glutamyl phosphate reductase from Corynebacterium diphtheriae (strain ATCC 700971 / NCTC 13129 / Biotype gravis).